We begin with the raw amino-acid sequence, 332 residues long: Glycerol-3-phosphate dehydrogenase [NAD(P)+] (332 aa).

3 residues coordinate NADPH: tryptophan 13, lysine 34, and lysine 108. Lysine 108, glycine 136, and serine 138 together coordinate sn-glycerol 3-phosphate. Alanine 140 is a binding site for NADPH. Sn-glycerol 3-phosphate is bound by residues lysine 191, aspartate 244, serine 254, arginine 255, and asparagine 256. The active-site Proton acceptor is the lysine 191. Arginine 255 contributes to the NADPH binding site. NADPH contacts are provided by valine 279 and glutamate 281.

Belongs to the NAD-dependent glycerol-3-phosphate dehydrogenase family.

Its subcellular location is the cytoplasm. It carries out the reaction sn-glycerol 3-phosphate + NAD(+) = dihydroxyacetone phosphate + NADH + H(+). The catalysed reaction is sn-glycerol 3-phosphate + NADP(+) = dihydroxyacetone phosphate + NADPH + H(+). It participates in membrane lipid metabolism; glycerophospholipid metabolism. Functionally, catalyzes the reduction of the glycolytic intermediate dihydroxyacetone phosphate (DHAP) to sn-glycerol 3-phosphate (G3P), the key precursor for phospholipid synthesis. The polypeptide is Glycerol-3-phosphate dehydrogenase [NAD(P)+] (Francisella tularensis subsp. tularensis (strain FSC 198)).